We begin with the raw amino-acid sequence, 514 residues long: 2,3-bisphosphoglycerate-independent phosphoglycerate mutase (514 aa).

The Mn(2+) site is built by Asp14 and Ser64. The active-site Phosphoserine intermediate is the Ser64. Residues His125, 155–156 (RD), Arg187, Arg193, 263–266 (RADR), and Lys336 each bind substrate. Positions 403, 407, 444, 445, and 463 each coordinate Mn(2+).

Belongs to the BPG-independent phosphoglycerate mutase family. Monomer. Requires Mn(2+) as cofactor.

The catalysed reaction is (2R)-2-phosphoglycerate = (2R)-3-phosphoglycerate. Its pathway is carbohydrate degradation; glycolysis; pyruvate from D-glyceraldehyde 3-phosphate: step 3/5. Its function is as follows. Catalyzes the interconversion of 2-phosphoglycerate and 3-phosphoglycerate. This Shewanella sp. (strain MR-7) protein is 2,3-bisphosphoglycerate-independent phosphoglycerate mutase.